A 364-amino-acid polypeptide reads, in one-letter code: UDP-N-acetylglucosamine--N-acetylmuramyl-(pentapeptide) pyrophosphoryl-undecaprenol N-acetylglucosamine transferase (364 aa).

Residues 10–12, N124, R166, S196, and Q297 contribute to the UDP-N-acetyl-alpha-D-glucosamine site; that span reads TGG.

This sequence belongs to the glycosyltransferase 28 family. MurG subfamily.

Its subcellular location is the cell membrane. The catalysed reaction is di-trans,octa-cis-undecaprenyl diphospho-N-acetyl-alpha-D-muramoyl-L-alanyl-D-glutamyl-meso-2,6-diaminopimeloyl-D-alanyl-D-alanine + UDP-N-acetyl-alpha-D-glucosamine = di-trans,octa-cis-undecaprenyl diphospho-[N-acetyl-alpha-D-glucosaminyl-(1-&gt;4)]-N-acetyl-alpha-D-muramoyl-L-alanyl-D-glutamyl-meso-2,6-diaminopimeloyl-D-alanyl-D-alanine + UDP + H(+). It participates in cell wall biogenesis; peptidoglycan biosynthesis. Cell wall formation. Catalyzes the transfer of a GlcNAc subunit on undecaprenyl-pyrophosphoryl-MurNAc-pentapeptide (lipid intermediate I) to form undecaprenyl-pyrophosphoryl-MurNAc-(pentapeptide)GlcNAc (lipid intermediate II). This chain is UDP-N-acetylglucosamine--N-acetylmuramyl-(pentapeptide) pyrophosphoryl-undecaprenol N-acetylglucosamine transferase, found in Thermoanaerobacter pseudethanolicus (strain ATCC 33223 / 39E) (Clostridium thermohydrosulfuricum).